Consider the following 248-residue polypeptide: tRNA1(Val) (adenine(37)-N6)-methyltransferase (248 aa).

It belongs to the methyltransferase superfamily. tRNA (adenine-N(6)-)-methyltransferase family.

The protein localises to the cytoplasm. It catalyses the reaction adenosine(37) in tRNA1(Val) + S-adenosyl-L-methionine = N(6)-methyladenosine(37) in tRNA1(Val) + S-adenosyl-L-homocysteine + H(+). In terms of biological role, specifically methylates the adenine in position 37 of tRNA(1)(Val) (anticodon cmo5UAC). The chain is tRNA1(Val) (adenine(37)-N6)-methyltransferase from Yersinia pseudotuberculosis serotype O:1b (strain IP 31758).